The sequence spans 307 residues: Fructokinase (307 aa).

Belongs to the carbohydrate kinase PfkB family.

The enzyme catalyses D-fructose + ATP = D-fructose 6-phosphate + ADP + H(+). This Escherichia coli protein is Fructokinase (cscK).